The sequence spans 328 residues: MSLIKIDQKAYEYNLRHIAKKIGSFQRLICVFKDNAYGHGAKLLAPLAKNLGVSFVAVKSEEEAQEIEEFFENILILSHRPHGNENSRFIYALNDISQAKKYKQDIKIHLKIDTGMHRNGICVENLEHAIDLIQSSDLKLTGMFTHFASADEMDGSFFVQKENFQKAKKIVKKYFSNLLFHSHNSAALFRGKIPEDEYCRVGLVQFGYGDSNLKRVLSLYAHRLSQRILQKGQSIGYGGIFTAAKDMEVATYDLGYADGLFRYNGKGELVLGNGKVMLGKMSMDSFSCENSGEEICVFKDADIWADFFHTINYEILVKLNPNIQRVLV.

The Proton acceptor; specific for D-alanine role is filled by K33. K33 is modified (N6-(pyridoxal phosphate)lysine). Residue R118 participates in substrate binding. Y237 (proton acceptor; specific for L-alanine) is an active-site residue. M283 provides a ligand contact to substrate.

It belongs to the alanine racemase family. Requires pyridoxal 5'-phosphate as cofactor.

It carries out the reaction L-alanine = D-alanine. Its pathway is amino-acid biosynthesis; D-alanine biosynthesis; D-alanine from L-alanine: step 1/1. In terms of biological role, catalyzes the interconversion of L-alanine and D-alanine. May also act on other amino acids. The chain is Alanine racemase (alr) from Campylobacter jejuni (strain RM1221).